A 244-amino-acid chain; its full sequence is 3-deoxy-manno-octulosonate cytidylyltransferase (244 aa).

This sequence belongs to the KdsB family.

The protein localises to the cytoplasm. It carries out the reaction 3-deoxy-alpha-D-manno-oct-2-ulosonate + CTP = CMP-3-deoxy-beta-D-manno-octulosonate + diphosphate. It participates in nucleotide-sugar biosynthesis; CMP-3-deoxy-D-manno-octulosonate biosynthesis; CMP-3-deoxy-D-manno-octulosonate from 3-deoxy-D-manno-octulosonate and CTP: step 1/1. It functions in the pathway bacterial outer membrane biogenesis; lipopolysaccharide biosynthesis. Activates KDO (a required 8-carbon sugar) for incorporation into bacterial lipopolysaccharide in Gram-negative bacteria. This chain is 3-deoxy-manno-octulosonate cytidylyltransferase, found in Dichelobacter nodosus (strain VCS1703A).